Reading from the N-terminus, the 162-residue chain is Sec-independent protein translocase protein TatB (162 aa).

Residues 1 to 21 traverse the membrane as a helical segment; the sequence is MFDLGWTELLVIGVVALIVVG. Disordered regions lie at residues 69 to 111 and 124 to 162; these read ATNP…DRAE and AADR…ETKA. Basic and acidic residues-rich tracts occupy residues 83-111 and 124-141; these read ATRD…DRAE and AADR…KAEE. The segment covering 144–155 has biased composition (low complexity); the sequence is AALSATPASTAS.

The protein belongs to the TatB family. As to quaternary structure, the Tat system comprises two distinct complexes: a TatABC complex, containing multiple copies of TatA, TatB and TatC subunits, and a separate TatA complex, containing only TatA subunits. Substrates initially bind to the TatABC complex, which probably triggers association of the separate TatA complex to form the active translocon.

It is found in the cell inner membrane. Its function is as follows. Part of the twin-arginine translocation (Tat) system that transports large folded proteins containing a characteristic twin-arginine motif in their signal peptide across membranes. Together with TatC, TatB is part of a receptor directly interacting with Tat signal peptides. TatB may form an oligomeric binding site that transiently accommodates folded Tat precursor proteins before their translocation. This is Sec-independent protein translocase protein TatB from Ruegeria sp. (strain TM1040) (Silicibacter sp.).